We begin with the raw amino-acid sequence, 491 residues long: Putative pentatricopeptide repeat-containing protein At1g02420 (491 aa).

PPR repeat units follow at residues D179–Q209, F210–P244, D245–P279, D280–P314, D315–P349, N350–P384, N385–S419, and Y420–P454.

The protein belongs to the PPR family. P subfamily.

The polypeptide is Putative pentatricopeptide repeat-containing protein At1g02420 (Arabidopsis thaliana (Mouse-ear cress)).